A 1561-amino-acid chain; its full sequence is MSGQVTQPKLIKDWTKEHVRKWVTEDLNIVEKYAQILFKEEVTGMVLQELTEEDLREMGLPRGPALLIKRMYNKLISSPESHNQDSRELNDKKLSTKEQQTKTKNEEENSVSSNSDHGLRETGQNEEQEPSLTKENMLGDVVTKDMEDNKPKPEQMSCTPYPFDSFCDVKQYIEHSILRVAETGPLNLIDPIHEFKAFTNTKKATEEDIKMKFSNETFRFAAACMNSRTNGTIHFGVKDKPHGEIVGVQVTSKDIFVNHFNTMITKYFEDSEISEARACIREPRFVEVLLQNNTQSNRFVIEVDVIPRHSICQEKYFYIMMQSSTGKTWKQSKDTSLFVREGASSKNILGNPNQRDREFKKFLEDLKMWTASRKAAEEELRMVTKKESEGLKLSKLLTRHQGSLDESYYDWYILVTNTCAPTQLEHLEFIKEMKLFAVLDFDPYSHIKGVVKAYRESRIANLHLPSHYEEKTTIAEKISTLKLYEQPSWIFCNGRVDLSCQPLEPHLWQRDRASGVRRLISFLTDENIIVKGKVLVVFLLLSPIENQKDPLIETFCAFYQVFNGMDNMLCICVNSAIYQQWSDLLQVRLEIKDDLAKHSISTLNIELVNNTILKLKSVIQSSRRFLPSCGSSSVILEKMDEDIMSALEILCENECKDTDIEKDESQFLEFKKSREEHFYRGGRVSWWNFYFSSENYSSAFVKRDSFEELTTLIQQCADSPKPVFVKVINLYHHPGCGGTTLAMHVLWDLKQKFRCAVLKNKATDFVEIGEQVSKLMSYKATSHEDFIPVLLLVDDFEEQENAYILQNAINAFIAEKGLRYEKTLVIILNCMRSQNPDESAKLANSISLKYQLSPKEQRAFEAKLQEIEKEHKNCENFYSFMILKGNFDTTYIKNVVKNTLKDLDAKSRRAQLISYLALLNSYVTDSTISVSQCEIFLGITYTKKYGKPETVEKNMGTYSTLLIRTEVSDYGRYTGIRIIHPLIATHCLKELEMSYRMDKCQIALNMLEENVLYDSGLGRDKFKYDVQTLLLTRQRKEHGAETDTLFSPLIEELQNEETEKVLIAGSDRFPQNAFICQALARHFYIKEKNFSTALVWANLAKRKAPKNSYISDTLGQVYKSELNSGWEVAEKASKAFKESQNQSDSKDYGTEAWSPQNSQRRYDTFNTAGFFGEIEVGLDTIQLLQLTPLFHKENEISKESMAEFLSGKGTILSDPKGEYCVVLSKFTSLLQNLHSDLERCFHFFGDYMGFLKPRNTPKELTELLLSKKVSRCFKKYVELFCHLDTNLVQGKEDLLLQKENCRKRIQAWRADTFSGLLEYLNPNHKEANNIENIVGNYTFLLQDILNKQLSKVLTKDIQNFILANIILSCLKPSSKYILPFSTLKKKLREVLQIVGLTHSYPDPYFLACLLFWPENKELDEDSTLIEKYVSSLNRSFRRQYKHMCRSRQPSTLFYLGQKKGLNSLVHKAEIERYFSEVQDSNSFWHSGVVWEKREVKDLLRLLDGQAEGKLISLEYGTEAKIKIPVTSVYSAPLRSGRNIERVSFYLGFSIEGPLAYGIKVI.

An SAM domain is found at 14–79 (WTKEHVRKWV…RMYNKLISSP (66 aa)). The disordered stretch occupies residues 78–157 (SPESHNQDSR…DNKPKPEQMS (80 aa)). 2 stretches are compositionally biased toward basic and acidic residues: residues 82–107 (HNQDSRELNDKKLSTKEQQTKTKNEE) and 142–153 (VTKDMEDNKPKP).

As to quaternary structure, interacts with EEA1.

It is found in the early endosome. It localises to the mitochondrion. Its function is as follows. May be involved in endosome fusion. Mediates down-regulation of growth factor signaling via internalization of growth factor receptors. This chain is Sterile alpha motif domain-containing protein 9-like (Samd9l), found in Mus musculus (Mouse).